Reading from the N-terminus, the 311-residue chain is Mitochondrial FAD carrier protein FLX1 (311 aa).

Solcar repeat units lie at residues 7-101 (TPLQ…TKEL), 123-210 (MNSL…LKQR), and 224-310 (LTNL…LKHR). The next 6 helical transmembrane spans lie at 13-33 (VISG…LDLL), 77-97 (LSIN…LYGV), 129-149 (LSAG…IWVI), 183-203 (LWKG…YFAV), 230-250 (IEIT…FQLL), and 266-286 (LFPL…YKGL).

The protein belongs to the mitochondrial carrier (TC 2.A.29) family.

The protein resides in the mitochondrion inner membrane. Its function is as follows. Transport of FAD from the cytosol to the mitochondrial matrix. This is Mitochondrial FAD carrier protein FLX1 (FLX1) from Saccharomyces cerevisiae (strain ATCC 204508 / S288c) (Baker's yeast).